The chain runs to 177 residues: Large ribosomal subunit protein uL6 (177 aa).

The protein belongs to the universal ribosomal protein uL6 family. As to quaternary structure, part of the 50S ribosomal subunit.

This protein binds to the 23S rRNA, and is important in its secondary structure. It is located near the subunit interface in the base of the L7/L12 stalk, and near the tRNA binding site of the peptidyltransferase center. In Methylorubrum extorquens (strain CM4 / NCIMB 13688) (Methylobacterium extorquens), this protein is Large ribosomal subunit protein uL6.